We begin with the raw amino-acid sequence, 69 residues long: Arabinogalactan protein 24 (69 aa).

A signal peptide spans 1–25; sequence MMMMTKMFVQIAVVCLLATMAVVSA. 4-hydroxyproline is present on residues Pro34, Pro36, Pro38, and Pro40. O-linked (Ara...) hydroxyproline glycans are attached at residues Pro34, Pro36, Pro38, and Pro40. A lipid anchor (GPI-anchor amidated serine) is attached at Ser42. The propeptide at 43–69 is removed in mature form; the sequence is SSTVVSATNMFTVLAIAAVALVVGSNH.

Belongs to the AG-peptide AGP family. Post-translationally, contains 4-hydroxyproline; hydroxylated on Pro-34, Pro-36, Pro-38 and Pro-40. O-glycosylated on hydroxyprolines; noncontiguous hydroxylproline residues are glycosylated with arabinogalactan.

It is found in the cell membrane. Functionally, proteoglycan that seems to be implicated in diverse developmental roles such as differentiation, cell-cell recognition, embryogenesis and programmed cell death. The sequence is that of Arabinogalactan protein 24 from Arabidopsis thaliana (Mouse-ear cress).